The primary structure comprises 529 residues: Bifunctional purine biosynthesis protein PurH (529 aa).

The region spanning 1–148 (MQQRRPIRRA…KNHKDVAIVV (148 aa)) is the MGS-like domain.

This sequence belongs to the PurH family.

It carries out the reaction (6R)-10-formyltetrahydrofolate + 5-amino-1-(5-phospho-beta-D-ribosyl)imidazole-4-carboxamide = 5-formamido-1-(5-phospho-D-ribosyl)imidazole-4-carboxamide + (6S)-5,6,7,8-tetrahydrofolate. The enzyme catalyses IMP + H2O = 5-formamido-1-(5-phospho-D-ribosyl)imidazole-4-carboxamide. Its pathway is purine metabolism; IMP biosynthesis via de novo pathway; 5-formamido-1-(5-phospho-D-ribosyl)imidazole-4-carboxamide from 5-amino-1-(5-phospho-D-ribosyl)imidazole-4-carboxamide (10-formyl THF route): step 1/1. It participates in purine metabolism; IMP biosynthesis via de novo pathway; IMP from 5-formamido-1-(5-phospho-D-ribosyl)imidazole-4-carboxamide: step 1/1. The protein is Bifunctional purine biosynthesis protein PurH of Pectobacterium atrosepticum (strain SCRI 1043 / ATCC BAA-672) (Erwinia carotovora subsp. atroseptica).